We begin with the raw amino-acid sequence, 365 residues long: tRNA/tmRNA (uracil-C(5))-methyltransferase (365 aa).

Residues Gln-189, Tyr-217, Asn-222, Glu-238, and Asp-298 each coordinate S-adenosyl-L-methionine. Cys-323 functions as the Nucleophile in the catalytic mechanism. Glu-357 serves as the catalytic Proton acceptor.

It belongs to the class I-like SAM-binding methyltransferase superfamily. RNA M5U methyltransferase family. TrmA subfamily.

It carries out the reaction uridine(54) in tRNA + S-adenosyl-L-methionine = 5-methyluridine(54) in tRNA + S-adenosyl-L-homocysteine + H(+). The enzyme catalyses uridine(341) in tmRNA + S-adenosyl-L-methionine = 5-methyluridine(341) in tmRNA + S-adenosyl-L-homocysteine + H(+). Dual-specificity methyltransferase that catalyzes the formation of 5-methyluridine at position 54 (m5U54) in all tRNAs, and that of position 341 (m5U341) in tmRNA (transfer-mRNA). This chain is tRNA/tmRNA (uracil-C(5))-methyltransferase, found in Shewanella sp. (strain MR-4).